Here is a 172-residue protein sequence, read N- to C-terminus: ATP synthase subunit b (172 aa).

Residues 27 to 47 (LAIVIFGLYKFLPPFVGGILE) form a helical membrane-spanning segment.

This sequence belongs to the ATPase B chain family. F-type ATPases have 2 components, F(1) - the catalytic core - and F(0) - the membrane proton channel. F(1) has five subunits: alpha(3), beta(3), gamma(1), delta(1), epsilon(1). F(0) has four main subunits: a(1), b(1), b'(1) and c(10-14). The alpha and beta chains form an alternating ring which encloses part of the gamma chain. F(1) is attached to F(0) by a central stalk formed by the gamma and epsilon chains, while a peripheral stalk is formed by the delta, b and b' chains.

It localises to the cellular thylakoid membrane. Its function is as follows. F(1)F(0) ATP synthase produces ATP from ADP in the presence of a proton or sodium gradient. F-type ATPases consist of two structural domains, F(1) containing the extramembraneous catalytic core and F(0) containing the membrane proton channel, linked together by a central stalk and a peripheral stalk. During catalysis, ATP synthesis in the catalytic domain of F(1) is coupled via a rotary mechanism of the central stalk subunits to proton translocation. Functionally, component of the F(0) channel, it forms part of the peripheral stalk, linking F(1) to F(0). The sequence is that of ATP synthase subunit b from Prochlorococcus marinus (strain MIT 9303).